A 764-amino-acid chain; its full sequence is Probable glutamate--tRNA ligase, cytoplasmic (764 aa).

228–230 (RFP) is a binding site for L-glutamate. The 'HIGH' region motif lies at 233–242 (PSGYMHIGHC). ATP is bound at residue histidine 238. L-glutamate-binding positions include aspartate 264, 404 to 408 (YDFAC), and arginine 422. ATP-binding positions include glutamate 425 and 460 to 464 (LLSKR). A 'KMSKS' region motif is present at residues 460–464 (LLSKR).

It belongs to the class-I aminoacyl-tRNA synthetase family. Glutamate--tRNA ligase type 2 subfamily.

It is found in the cytoplasm. The enzyme catalyses tRNA(Glu) + L-glutamate + ATP = L-glutamyl-tRNA(Glu) + AMP + diphosphate. Functionally, catalyzes the attachment of glutamate to tRNA(Glu) in a two-step reaction: glutamate is first activated by ATP to form Glu-AMP and then transferred to the acceptor end of tRNA(Glu). The sequence is that of Probable glutamate--tRNA ligase, cytoplasmic (gluS) from Dictyostelium discoideum (Social amoeba).